A 540-amino-acid polypeptide reads, in one-letter code: MVRFIFITGGVVSSLGKGLTAASLAMLLQAKGFKVCLRKLDPYLNVDPGTMNPHQHGEVYVTDDGAETDLDLGHYERFTGVPACKFDNITTGAVYSKLLKEERLGNYTGLTVQVIPHVTNIIKDFILSNTKGFDFVLCEIGGTVGDIEGLPFFEAIRQIGNELKSKQCLFIHLTLLPYVKTARELKTKPTQHSVKELRTIGISPNILVCRAERKIAKSEIEKIALFCNIDPEYVIPAIDQKNIYLVPLAYHDYGLDNKVLKFFNLTIAPSKLNRWHDIIERLKESHSKVRIAIIAKYHKLKDAYKSVIEALDHAGIYHKYKVDLVWINAENVTNENISKKLLGVDGILVPGGFGERATEGKILAVNYARTNNIPFFGICLGMQLAAIEIARNLVGLKDAVTEEFKTAGTKIIERISKHDEDFNPSDITIENIKKTMRLGSYTCNLVSDSITANAYGELKISERHRHRYKFNNDFQDIFEKNGVKFSGFSEDKKIVEAIELPKLLWFVGVQFHPEFKSKPFEAHPLFIRFVEAAIKYNKNN.

Residues 1 to 265 (MVRFIFITGG…DNKVLKFFNL (265 aa)) are amidoligase domain. CTP is bound at residue Ser13. Residue Ser13 participates in UTP binding. ATP contacts are provided by residues 14 to 19 (SLGKGL) and Asp71. Positions 71 and 139 each coordinate Mg(2+). CTP contacts are provided by residues 146–148 (DIE), 186–191 (KTKPTQ), and Lys222. UTP contacts are provided by residues 186–191 (KTKPTQ) and Lys222. One can recognise a Glutamine amidotransferase type-1 domain in the interval 290-539 (RIAIIAKYHK…VEAAIKYNKN (250 aa)). Residue Gly352 coordinates L-glutamine. Catalysis depends on Cys379, which acts as the Nucleophile; for glutamine hydrolysis. Residues 380-383 (LGMQ), Glu403, and Arg467 each bind L-glutamine. Catalysis depends on residues His512 and Glu514.

It belongs to the CTP synthase family. As to quaternary structure, homotetramer.

The enzyme catalyses UTP + L-glutamine + ATP + H2O = CTP + L-glutamate + ADP + phosphate + 2 H(+). The catalysed reaction is L-glutamine + H2O = L-glutamate + NH4(+). It carries out the reaction UTP + NH4(+) + ATP = CTP + ADP + phosphate + 2 H(+). It functions in the pathway pyrimidine metabolism; CTP biosynthesis via de novo pathway; CTP from UDP: step 2/2. With respect to regulation, allosterically activated by GTP, when glutamine is the substrate; GTP has no effect on the reaction when ammonia is the substrate. The allosteric effector GTP functions by stabilizing the protein conformation that binds the tetrahedral intermediate(s) formed during glutamine hydrolysis. Inhibited by the product CTP, via allosteric rather than competitive inhibition. Its function is as follows. Catalyzes the ATP-dependent amination of UTP to CTP with either L-glutamine or ammonia as the source of nitrogen. Regulates intracellular CTP levels through interactions with the four ribonucleotide triphosphates. The protein is CTP synthase of Rickettsia bellii (strain RML369-C).